The sequence spans 352 residues: MAISLQKSTVVKVVGVSLVMLLAACSTDQRYKRQVSGDESYLTAPGLKPLNAPSGMILPVQNGEFDVRTVNSQGAVGKQLDIRPPVQPLTLLSGSRAENATDTSKLLLENSPQNRDLWAQVTRVLQDHNWPIASRQDASQTLTTDWIKWNRADEDVQFEGRYQISVQEQGYQLALVVKSLELQQGGKTITQYSEIQRYNSAMLNAIIEGLDKVRADSESSQASRKVGTLDVQSGSDDTGLPLLIVRAPYAVVWERLPAALEKVGMKVTDRSRPQGTVSVTSKSLSSSSWDALGAKDPELPEGDYKLQVGDLDNRSSLQFIGPKGHTLTQAQNDALVAVFQAAFSQTSATAIK.

Positions 1–24 (MAISLQKSTVVKVVGVSLVMLLAA) are cleaved as a signal peptide. A lipid anchor (N-palmitoyl cysteine) is attached at C25. C25 carries the S-diacylglycerol cysteine lipid modification.

The protein belongs to the BamC family. Part of the Bam complex, which is composed of the outer membrane protein BamA, and four lipoproteins BamB, BamC, BamD and BamE.

It is found in the cell outer membrane. Its function is as follows. Part of the outer membrane protein assembly complex, which is involved in assembly and insertion of beta-barrel proteins into the outer membrane. The polypeptide is Outer membrane protein assembly factor BamC (Yersinia pestis).